The following is a 48-amino-acid chain: ATP synthase protein 8 (48 aa).

M1 bears the N-formylmethionine mark. The Mitochondrial intermembrane segment spans residues 1–12; the sequence is MPQLVPFYFTNQ. A helical transmembrane segment spans residues 13 to 32; that stretch reads IFYGFASLSVIVYLFSIYIL. Residues 33 to 48 lie on the Mitochondrial matrix side of the membrane; sequence PHYLEIYVTRIFITKT.

In terms of assembly, F-type ATP synthases have 2 components, the catalytic core F(1) and the membrane-embedded component F(0), linked together by a central stalk and a peripheral stalk. The central stalk, also called rotor shaft, is often seen as part of F(1). The peripheral stalk is seen as part of F(0). F(0) contains the membrane channel next to the rotor. F-type ATP synthases form dimers but each monomer functions independently in ATP generation. The dimer consists of 17 different polypeptides: ATP1 (subunit alpha, 3 molecules per monomer, part of F(1)), ATP2 (subunit beta, 3 copies per monomer, part of F(1)), ATP3 (subunit gamma, part of the central stalk), ATP4 (subunit b, part of the peripheral stalk), ATP5/OSCP (subunit 5/OSCP, part of the peripheral stalk), ATP6 (subunit a, part of the peripheral stalk), ATP7 (subunit d, part of the peripheral stalk), ATP8 (subunit 8, part of the peripheral stalk), OLI1 (subunit c, part of the rotor, 10 molecules per monomer), ATP14 (subunit h, part of the peripheral stalk), ATP15 (subunit epsilon, part of the central stalk), ATP16 (subunit delta, part of the central stalk), ATP17 (subunit f, part of the peripheral stalk), ATP18 (subunit i/j, part of the peripheral stalk), ATP19 (subunit k, dimer-specific, at interface between monomers), ATP20 (subunit g, at interface between monomers), TIM11 (subunit e, at interface between monomers).

The protein resides in the mitochondrion inner membrane. In terms of biological role, mitochondrial membrane ATP synthase (F(1)F(0) ATP synthase or Complex V) produces ATP from ADP in the presence of a proton gradient across the membrane which is generated by electron transport complexes of the respiratory chain. F-type ATP synthases consist of two structural domains, F(1) - containing the extramembraneous catalytic core, and F(0) - containing the membrane proton channel, linked together by a central stalk and a peripheral stalk. During catalysis, ATP synthesis in the catalytic domain of F(1) is coupled via a rotary mechanism of the central stalk subunits to proton translocation. Part of the complex F(0) domain. Minor subunit located with subunit a/ATP6 in the membrane. The protein is ATP synthase protein 8 of Yarrowia lipolytica (strain CLIB 122 / E 150) (Yeast).